Consider the following 424-residue polypeptide: Ribulose bisphosphate carboxylase (424 aa).

Lysine 159 acts as the Proton acceptor in catalysis. Lysine 161 is a substrate binding site. Mg(2+) is bound by residues lysine 185, aspartate 187, and glutamate 188. The residue at position 185 (lysine 185) is an N6-carboxylysine. Histidine 277 (proton acceptor) is an active-site residue. Residues arginine 278, histidine 310, 347 to 349, and 369 to 372 each bind substrate; these read SGG and QAGG.

Belongs to the RuBisCO large chain family. Type III subfamily. As to quaternary structure, homodimer or homodecamer. In contrast to form I RuBisCO, the form III RuBisCO is composed solely of large subunits. Mg(2+) is required as a cofactor.

The catalysed reaction is 2 (2R)-3-phosphoglycerate + 2 H(+) = D-ribulose 1,5-bisphosphate + CO2 + H2O. It carries out the reaction D-ribulose 1,5-bisphosphate + O2 = 2-phosphoglycolate + (2R)-3-phosphoglycerate + 2 H(+). In terms of biological role, catalyzes the addition of molecular CO(2) and H(2)O to ribulose 1,5-bisphosphate (RuBP), generating two molecules of 3-phosphoglycerate (3-PGA). Functions in an archaeal AMP degradation pathway, together with AMP phosphorylase and R15P isomerase. The polypeptide is Ribulose bisphosphate carboxylase (Pyrococcus abyssi (strain GE5 / Orsay)).